A 396-amino-acid chain; its full sequence is Tryptophan synthase beta chain (396 aa).

Residue K90 is modified to N6-(pyridoxal phosphate)lysine.

This sequence belongs to the TrpB family. In terms of assembly, tetramer of two alpha and two beta chains. Pyridoxal 5'-phosphate serves as cofactor.

It carries out the reaction (1S,2R)-1-C-(indol-3-yl)glycerol 3-phosphate + L-serine = D-glyceraldehyde 3-phosphate + L-tryptophan + H2O. Its pathway is amino-acid biosynthesis; L-tryptophan biosynthesis; L-tryptophan from chorismate: step 5/5. In terms of biological role, the beta subunit is responsible for the synthesis of L-tryptophan from indole and L-serine. In Clostridium kluyveri (strain NBRC 12016), this protein is Tryptophan synthase beta chain.